Here is a 250-residue protein sequence, read N- to C-terminus: Membrane-spanning 4-domains subfamily A member 8 (250 aa).

At 1-74 (MNSMTSAVPV…ALKEGKTLGA (74 aa)) the chain is on the cytoplasmic side. Residues 75–95 (IQIIIGLAHIGLGSIMATVLV) form a helical membrane-spanning segment. The Extracellular portion of the chain corresponds to 96 to 98 (GEY). Residues 99–119 (LSISFYGGFPFWGGLWFIISG) form a helical membrane-spanning segment. The Cytoplasmic portion of the chain corresponds to 120-136 (SLSVAAENQPYSYCLLS). Residues 137 to 157 (GSLGLNIVSAICSAVGVILFI) traverse the membrane as a helical segment. At 158–180 (TDLSIPHPYAYPDYYPYAWGVNP) the chain is on the extracellular side. A helical membrane pass occupies residues 181–201 (GMAISGVLLVFCLLEFGIACA). At 202 to 250 (SSHFGCQLVCCQSSNVSVIYPNIYAANPVITPEPVTSPPSYSSEIQANK) the chain is on the cytoplasmic side.

It belongs to the MS4A family. In terms of tissue distribution, expressed by hematopoietic tissues and cells lines.

The protein localises to the membrane. May be involved in signal transduction as a component of a multimeric receptor complex. In Homo sapiens (Human), this protein is Membrane-spanning 4-domains subfamily A member 8 (MS4A8).